A 331-amino-acid polypeptide reads, in one-letter code: Biotin synthase (331 aa).

A Radical SAM core domain is found at 39–264 (SELQTCYLVS…VFPQSMVRLA (226 aa)). The [4Fe-4S] cluster site is built by C54, C58, and C61. Residues C98, C130, C190, and R262 each contribute to the [2Fe-2S] cluster site.

It belongs to the radical SAM superfamily. Biotin synthase family. As to quaternary structure, homodimer. Requires [4Fe-4S] cluster as cofactor. [2Fe-2S] cluster serves as cofactor.

It catalyses the reaction (4R,5S)-dethiobiotin + (sulfur carrier)-SH + 2 reduced [2Fe-2S]-[ferredoxin] + 2 S-adenosyl-L-methionine = (sulfur carrier)-H + biotin + 2 5'-deoxyadenosine + 2 L-methionine + 2 oxidized [2Fe-2S]-[ferredoxin]. It participates in cofactor biosynthesis; biotin biosynthesis; biotin from 7,8-diaminononanoate: step 2/2. In terms of biological role, catalyzes the conversion of dethiobiotin (DTB) to biotin by the insertion of a sulfur atom into dethiobiotin via a radical-based mechanism. The protein is Biotin synthase of Chlamydia abortus (strain DSM 27085 / S26/3) (Chlamydophila abortus).